Consider the following 246-residue polypeptide: uncharacterized protein (246 aa).

This is an uncharacterized protein from Acanthamoeba polyphaga (Amoeba).